The primary structure comprises 274 residues: Serine protease 28 (274 aa).

Positions methionine 1 to serine 26 are cleaved as a signal peptide. The Peptidase S1 domain occupies isoleucine 31 to glutamine 274. Cysteine 62 and cysteine 78 are oxidised to a cystine. Residue histidine 77 is the Charge relay system of the active site. A glycan (N-linked (GlcNAc...) asparagine) is linked at asparagine 106. Aspartate 124 acts as the Charge relay system in catalysis. 3 cysteine pairs are disulfide-bonded: cysteine 158/cysteine 233, cysteine 191/cysteine 214, and cysteine 223/cysteine 251. Serine 227 functions as the Charge relay system in the catalytic mechanism.

This sequence belongs to the peptidase S1 family. In terms of assembly, homooligomer, heterodimer and heterotetramer. Able to form homo- and hetero- tetrameric structures. Heterotetramer is far more stable than the homotetramer. As to expression, expressed in embryos throughout the preimplantation period, during blastocyst hatching and embryo outgrowth. Found in uterus especially in glandular epithelium.

It is found in the secreted. Inhibited by benzamidine, (4-amidino-phenyl)-methane-sulfonyl (APMSF), N-p-tosyl-L-lysine chloromethylketone (TLCK), gabexate, mesylate, BABIM and trypsin soybean inhibitor (TSI). Its function is as follows. Involved in embryo hatching and implantation. In Mus musculus (Mouse), this protein is Serine protease 28 (Prss28).